The chain runs to 210 residues: LexA repressor (210 aa).

A DNA-binding region (H-T-H motif) is located at residues 25–44; it reads AGQVAQEVGITKQAISQQVN. Residues Ser120 and Lys159 each act as for autocatalytic cleavage activity in the active site.

Belongs to the peptidase S24 family. In terms of assembly, homodimer.

The enzyme catalyses Hydrolysis of Ala-|-Gly bond in repressor LexA.. In terms of biological role, represses a number of genes involved in the response to DNA damage (SOS response), including recA and lexA. In the presence of single-stranded DNA, RecA interacts with LexA causing an autocatalytic cleavage which disrupts the DNA-binding part of LexA, leading to derepression of the SOS regulon and eventually DNA repair. In Deinococcus radiodurans (strain ATCC 13939 / DSM 20539 / JCM 16871 / CCUG 27074 / LMG 4051 / NBRC 15346 / NCIMB 9279 / VKM B-1422 / R1), this protein is LexA repressor.